A 342-amino-acid polypeptide reads, in one-letter code: 29 kDa ribonucleoprotein, chloroplastic (342 aa).

The N-terminal 65 residues, 1-65, are a transit peptide targeting the chloroplast; sequence MSASASSLSA…PAEYPSRFVR (65 aa). An RRM 1 domain is found at 99–177; sequence LKLFVGNLSF…RPLRVNAGPP (79 aa). S107 and S204 each carry phosphoserine. Residues 167 to 255 are disordered; it reads GRPLRVNAGP…GSGSGSGSGS (89 aa). A linker (Gly-rich) region spans residues 178–256; the sequence is PPKREESFSR…SGSGSGSGSG (79 aa). Gly residues-rich tracts occupy residues 190 to 237 and 245 to 255; these read RSGG…GYGG and SGSGSGSGSGS. The RRM 2 domain maps to 257–335; sequence NRLYVGNLSW…RQIRVSEAEA (79 aa).

Its subcellular location is the plastid. The protein resides in the chloroplast. In terms of biological role, stabilizes specific chloroplast mRNAs. Required for normal chloroplast development under cold stress conditions by stabilizing transcripts of numerous mRNAs under these conditions. This is 29 kDa ribonucleoprotein, chloroplastic from Arabidopsis thaliana (Mouse-ear cress).